The chain runs to 233 residues: Ribosomal RNA small subunit methyltransferase G (233 aa).

Residues 1 to 25 (MASRQSPMAVSQPDHADRSAALQLT) are disordered. S-adenosyl-L-methionine is bound by residues G85, F90, and R155.

This sequence belongs to the methyltransferase superfamily. RNA methyltransferase RsmG family.

It is found in the cytoplasm. It carries out the reaction guanosine(527) in 16S rRNA + S-adenosyl-L-methionine = N(7)-methylguanosine(527) in 16S rRNA + S-adenosyl-L-homocysteine. Functionally, specifically methylates the N7 position of guanine in position 527 of 16S rRNA. In Rhodopseudomonas palustris (strain BisB5), this protein is Ribosomal RNA small subunit methyltransferase G.